Consider the following 1201-residue polypeptide: MLDVNNFEYMKIGLASPDKIRSWSHGEVKKPETINYRTLKPERDGLFCERIFGPMKDWECSCGKYKRVRYKGVVCDRCGVEVTKSKVRRERMGHIELAAPVSHIWYFKGIPSRMGLVMDMSPRALEEIIYFASYVVTEPGDTPLEKKQLLSEREYRVYREKYGKGFSAGMGAEAIKKILSDIDLEKETNDLKEELKSAQGQRRTRAIRRLEVMEAFRNSGNNPSWMVLDVLPVIPPEIRPMVQLEGGRFATSDLNDLYRRVINRNNRLKRLLDLGAPNIIVQNEKRMLQEAVDALIDNGRRGRPVTGPGNRPLKSLSHMLKGKQGRFRQNLLGKRVDYSGRSVIVVGPNLKMYQCGLPKEMALELFKPFVMKELVGRGLAHNIKSAKRKIERMSPEIWDVLEEVIREHPVLLNRAPTLHRLGIQAFEPTLVEGRAIRLHPLVCTAYNADFDGDQMAVHVPLSAEAQAEARILMLAAQNILNPKDGKPVVTPSQDMVLGNYYLTLERENAVGEGTIFKDINEAQLAYQNGYVHLHSRIAVFAGSIPNERFTDEQRNQLLITTVGKLIFNTILPKSFPYINEPTKFNLEIETPSKYFVDTTTDVRAHIAAQELIDPFKKKILGNIIAEVFKKFHITETSKMLDRMKDLGFKISTKAGMTVGIADILTLEEKHEILEKAHDTVEKITKSFRRGLITDDERYERVIAVWNAAKDEIQGKLILSLDRLNPIFMMQDSGARGNISNFTQLAGMRGLMADPSGRIVELPITSNFREGLTVLEYFISTHGARKGLTDTALKTADSGYLTRRLVDVAQDVIIREDDCGTDRGLTIKAIREGTEIIEPLEERLEGRYSRKTIRHPETKEVIARENDLITEAIATQIVEAGIEEVTIRSAFTCNTKHGVCKKCYGKNLATGTEVEVGEAVGIIAAQSIGEPGTQLTMRTFHTGGVAGDDITQGLPRIQEIFEARNPKGQAIITEVGGEVVSIEEGRDRQQEITIQGTDDRRSYNIPYTARLRVEEGTIVERGEALTEGSVDPKALIRVRDVLSVQEYLLAEVQKVYRMQGVEIGDKHVEVMVRQMLRKIRVMDTGDTNILPGTLMDIHTFTEANREAILSGSQPATGRPVLLGITKASLETDSFLSAASFQETTRVLTDAAIKGKRDELLGLKENVILGKLVPAGTGIGRYRKLKSEVIKETAEVTDEITNI.

Zn(2+) is bound by residues C60, C62, C75, and C78. Positions 449, 451, and 453 each coordinate Mg(2+). Zn(2+)-binding residues include C818, C892, C899, and C902.

The protein belongs to the RNA polymerase beta' chain family. As to quaternary structure, the RNAP catalytic core consists of 2 alpha, 1 beta, 1 beta' and 1 omega subunit. When a sigma factor is associated with the core the holoenzyme is formed, which can initiate transcription. It depends on Mg(2+) as a cofactor. Zn(2+) is required as a cofactor.

It carries out the reaction RNA(n) + a ribonucleoside 5'-triphosphate = RNA(n+1) + diphosphate. DNA-dependent RNA polymerase catalyzes the transcription of DNA into RNA using the four ribonucleoside triphosphates as substrates. This Listeria welshimeri serovar 6b (strain ATCC 35897 / DSM 20650 / CCUG 15529 / CIP 8149 / NCTC 11857 / SLCC 5334 / V8) protein is DNA-directed RNA polymerase subunit beta'.